We begin with the raw amino-acid sequence, 513 residues long: ATP synthase subunit alpha (513 aa).

169-176 (GDRQTGKT) is a binding site for ATP.

This sequence belongs to the ATPase alpha/beta chains family. As to quaternary structure, F-type ATPases have 2 components, CF(1) - the catalytic core - and CF(0) - the membrane proton channel. CF(1) has five subunits: alpha(3), beta(3), gamma(1), delta(1), epsilon(1). CF(0) has three main subunits: a(1), b(2) and c(9-12). The alpha and beta chains form an alternating ring which encloses part of the gamma chain. CF(1) is attached to CF(0) by a central stalk formed by the gamma and epsilon chains, while a peripheral stalk is formed by the delta and b chains.

It localises to the cell inner membrane. The catalysed reaction is ATP + H2O + 4 H(+)(in) = ADP + phosphate + 5 H(+)(out). In terms of biological role, produces ATP from ADP in the presence of a proton gradient across the membrane. The alpha chain is a regulatory subunit. The chain is ATP synthase subunit alpha from Salmonella paratyphi C (strain RKS4594).